The primary structure comprises 98 residues: Large ribosomal subunit protein eL14 (98 aa).

This sequence belongs to the eukaryotic ribosomal protein eL14 family.

This chain is Large ribosomal subunit protein eL14, found in Hyperthermus butylicus (strain DSM 5456 / JCM 9403 / PLM1-5).